The primary structure comprises 43 residues: Hemolysin H1U (43 aa).

Position 1 is an N-formylmethionine (Met1).

This sequence belongs to the staphylococcal hemolytic protein family.

Its subcellular location is the secreted. In terms of biological role, virulence factor. Causes hemolysis of erythrocytes. Acts synergistically with beta-hemolysins from S.aureus ATCC 25923. Cytotoxic towards human dermal fibroblasts. The protein is Hemolysin H1U of Staphylococcus ureilyticus (Staphylococcus cohnii subsp. urealyticus).